Consider the following 331-residue polypeptide: Major ferric iron-binding protein (331 aa).

The first 22 residues, 1–22 (MKTSIRYALLAAALTAATPALA), serve as a signal peptide directing secretion. 4 residues coordinate Fe cation: histidine 31, glutamate 79, tyrosine 217, and tyrosine 218.

This sequence belongs to the bacterial solute-binding protein 1 family.

The protein localises to the periplasm. Functionally, this protein may be a central component in the iron-acquisition system. The protein is Major ferric iron-binding protein (fbpA) of Neisseria meningitidis serogroup B (strain ATCC BAA-335 / MC58).